Reading from the N-terminus, the 56-residue chain is Large ribosomal subunit protein bL32 (56 aa).

Basic residues predominate over residues 1–19; sequence MAVPKRKKSRSTTRHRRAQ. The disordered stretch occupies residues 1-22; it reads MAVPKRKKSRSTTRHRRAQWKT.

This sequence belongs to the bacterial ribosomal protein bL32 family.

The sequence is that of Large ribosomal subunit protein bL32 from Cutibacterium acnes (strain DSM 16379 / KPA171202) (Propionibacterium acnes).